We begin with the raw amino-acid sequence, 137 residues long: Large ribosomal subunit protein uL16 (137 aa).

It belongs to the universal ribosomal protein uL16 family. Part of the 50S ribosomal subunit.

Functionally, binds 23S rRNA and is also seen to make contacts with the A and possibly P site tRNAs. The chain is Large ribosomal subunit protein uL16 from Azotobacter vinelandii (strain DJ / ATCC BAA-1303).